Consider the following 208-residue polypeptide: Urease accessory protein UreG (208 aa).

12-19 (GPVGAGKT) serves as a coordination point for GTP.

It belongs to the SIMIBI class G3E GTPase family. UreG subfamily. In terms of assembly, homodimer. UreD, UreF and UreG form a complex that acts as a GTP-hydrolysis-dependent molecular chaperone, activating the urease apoprotein by helping to assemble the nickel containing metallocenter of UreC. The UreE protein probably delivers the nickel.

Its subcellular location is the cytoplasm. Its function is as follows. Facilitates the functional incorporation of the urease nickel metallocenter. This process requires GTP hydrolysis, probably effectuated by UreG. This Rhodobacter capsulatus (Rhodopseudomonas capsulata) protein is Urease accessory protein UreG.